Reading from the N-terminus, the 434-residue chain is Monodehydroascorbate reductase, seedling isozyme (434 aa).

Residues 13-16 (GGVA), Glu40, Arg47, Lys52, Ile95, and 146-147 (RE) contribute to the FAD site. Residues 171-177 (GGYIGLE), Glu195, Arg201, and Gly260 each bind NAD(+). An NADP(+)-binding site is contributed by 173 to 177 (YIGLE). 2 residues coordinate NADP(+): Arg201 and Gly260. Asp297 lines the FAD pocket. 313 to 314 (EH) is a binding site for NAD(+). 313-314 (EH) contacts NADP(+). Val315 lines the FAD pocket. An L-ascorbate-binding site is contributed by Arg319. An FAD-binding site is contributed by Tyr348. Position 348 (Tyr348) interacts with NAD(+). Tyr348 is an NADP(+) binding site. Arg350 contacts L-ascorbate.

Belongs to the FAD-dependent oxidoreductase family. Requires FAD as cofactor.

The protein resides in the cytoplasm. The catalysed reaction is 2 monodehydro-L-ascorbate radical + NADH + H(+) = 2 L-ascorbate + NAD(+). Catalyzes the conversion of monodehydroascorbate to ascorbate, oxidizing NADH in the process. This chain is Monodehydroascorbate reductase, seedling isozyme, found in Cucumis sativus (Cucumber).